Reading from the N-terminus, the 443-residue chain is Putative metabolite transport protein YaaU (443 aa).

Over 1–18 (MQPSRNFDDLKFSSIHRR) the chain is Cytoplasmic. Residues 19–39 (ILLWGSGGPFLDGYVLVMIGV) form a helical membrane-spanning segment. Topologically, residues 40 to 53 (ALEQLTPALKLDAD) are periplasmic. Residues 54-74 (WIGLLGAGTLAGLFVGTSLFG) form a helical membrane-spanning segment. Over 75-84 (YISDKVGRRK) the chain is Cytoplasmic. The helical transmembrane segment at 85–105 (MFLIDIIAIGVISVATMFVSS) threads the bilayer. Residues 106–113 (PVELLVMR) are Periplasmic-facing. The chain crosses the membrane as a helical span at residues 114 to 134 (VLIGIVIGADYPIATSMITEF). Residues 135–145 (SSTRQRAFSIS) are Cytoplasmic-facing. Residues 146 to 166 (FIAAMWYVGATCADLVGYWLY) traverse the membrane as a helical segment. At 167 to 173 (DVEGGWR) the chain is on the periplasmic side. Residues 174 to 194 (WMLGSAAIPCLLILIGRFELP) traverse the membrane as a helical segment. Over 195-241 (ESPRWLLRKGRVKECEEMMIKLFGEPVAFDEEQPQQTRFRDLFNRRH) the chain is Cytoplasmic. Residues 242 to 262 (FPFVLFVAAIWTCQVIPMFAI) form a helical membrane-spanning segment. The Periplasmic segment spans residues 263 to 282 (YTFGPQIVGLLGLGVGKNAA). A helical transmembrane segment spans residues 283–303 (LGNVVISLFFMLGCIPPMLWL). The Cytoplasmic segment spans residues 304–309 (NTAGRR). The chain crosses the membrane as a helical span at residues 310–329 (PLLIGSFAMMTLALAVLGLI). The Periplasmic segment spans residues 330-334 (PDMGI). The chain crosses the membrane as a helical span at residues 335–357 (WLVVMAFAVYAFFSGGPGNLQWL). Residues 358–373 (YPNELFPTDIRASAVG) are Cytoplasmic-facing. A helical membrane pass occupies residues 374 to 394 (VIMSLSRIGTIVSTWALPIFI). The Periplasmic segment spans residues 395–401 (NNYGISN). The chain crosses the membrane as a helical span at residues 402–422 (TMLMGAGISLFGLLISVAFAP). Over 423-443 (ETRGMSLAQTSNMTIRGQRMG) the chain is Cytoplasmic.

It belongs to the major facilitator superfamily. Sugar transporter (TC 2.A.1.1) family.

It is found in the cell inner membrane. The protein is Putative metabolite transport protein YaaU (yaaU) of Escherichia coli (strain K12).